Reading from the N-terminus, the 448-residue chain is Exodeoxyribonuclease 7 large subunit (448 aa).

The protein belongs to the XseA family. As to quaternary structure, heterooligomer composed of large and small subunits.

Its subcellular location is the cytoplasm. It carries out the reaction Exonucleolytic cleavage in either 5'- to 3'- or 3'- to 5'-direction to yield nucleoside 5'-phosphates.. Its function is as follows. Bidirectionally degrades single-stranded DNA into large acid-insoluble oligonucleotides, which are then degraded further into small acid-soluble oligonucleotides. In Nitrosomonas eutropha (strain DSM 101675 / C91 / Nm57), this protein is Exodeoxyribonuclease 7 large subunit.